Here is a 118-residue protein sequence, read N- to C-terminus: Phosphoribosyl-AMP cyclohydrolase (118 aa).

Aspartate 87 is a Mg(2+) binding site. Cysteine 88 is a Zn(2+) binding site. The Mg(2+) site is built by aspartate 89 and aspartate 91. Residues cysteine 104 and cysteine 111 each coordinate Zn(2+).

It belongs to the PRA-CH family. In terms of assembly, homodimer. Mg(2+) serves as cofactor. Zn(2+) is required as a cofactor.

The protein resides in the cytoplasm. The catalysed reaction is 1-(5-phospho-beta-D-ribosyl)-5'-AMP + H2O = 1-(5-phospho-beta-D-ribosyl)-5-[(5-phospho-beta-D-ribosylamino)methylideneamino]imidazole-4-carboxamide. The protein operates within amino-acid biosynthesis; L-histidine biosynthesis; L-histidine from 5-phospho-alpha-D-ribose 1-diphosphate: step 3/9. In terms of biological role, catalyzes the hydrolysis of the adenine ring of phosphoribosyl-AMP. In Corynebacterium glutamicum (strain ATCC 13032 / DSM 20300 / JCM 1318 / BCRC 11384 / CCUG 27702 / LMG 3730 / NBRC 12168 / NCIMB 10025 / NRRL B-2784 / 534), this protein is Phosphoribosyl-AMP cyclohydrolase.